Reading from the N-terminus, the 187-residue chain is Resolvase OPG149 (187 aa).

The protein belongs to the RuvC family. Poxviruses-type subfamily. The cofactor is Mg(2+).

Plays a role in DNA replication by cleaving viral DNA concatamers to yield unit-length viral genomes. The concatamer junctions contain inverted repeat sequences that can be extruded as cruciforms, yielding Holliday junctions that A22 protein cleaves. The sequence is that of Resolvase OPG149 (OPG149) from Cynomys gunnisoni (Gunnison's prairie dog).